Reading from the N-terminus, the 83-residue chain is Large ribosomal subunit protein bL31B (83 aa).

This sequence belongs to the bacterial ribosomal protein bL31 family. Type B subfamily. In terms of assembly, part of the 50S ribosomal subunit.

This is Large ribosomal subunit protein bL31B from Leifsonia xyli subsp. xyli (strain CTCB07).